A 382-amino-acid chain; its full sequence is Pyrimidine monooxygenase RutA (382 aa).

Residues 68–69, Asn134, Glu143, 159–160, and Ser209 each bind FMN; these read IK and RY.

Belongs to the NtaA/SnaA/DszA monooxygenase family. RutA subfamily.

It carries out the reaction uracil + FMNH2 + NADH + O2 = (Z)-3-ureidoacrylate + FMN + NAD(+) + H2O + H(+). The catalysed reaction is thymine + FMNH2 + NADH + O2 = (Z)-2-methylureidoacrylate + FMN + NAD(+) + H2O + H(+). Functionally, catalyzes the pyrimidine ring opening between N-3 and C-4 by an unusual flavin hydroperoxide-catalyzed mechanism, adding oxygen atoms in the process to yield ureidoacrylate peracid, that immediately reacts with FMN forming ureidoacrylate and FMN-N(5)-oxide. The FMN-N(5)-oxide reacts spontaneously with NADH to produce FMN. Requires the flavin reductase RutF to regenerate FMN in vivo. The chain is Pyrimidine monooxygenase RutA from Escherichia coli (strain SE11).